The primary structure comprises 159 residues: MSDEEHHFESKADAGASKTYPQQAGTIRKGGHIVIKNRPCKVVEVSTSKTGKHGHAKCHFVAIDIFTGKKLEDIVPSSHNCDVPHVNRTDYQLIDISEDGFVSLLTENGNTKDDLRLPTDDTLLAQVKDGFAEGKDLVLSVMSAMGEEQICGIKDIGPK.

Basic and acidic residues predominate over residues 1–12 (MSDEEHHFESKA). The segment at 1 to 23 (MSDEEHHFESKADAGASKTYPQQ) is disordered. Lysine 52 carries the hypusine modification.

Belongs to the eIF-5A family. In terms of processing, lys-52 undergoes hypusination, a unique post-translational modification that consists in the addition of a butylamino group from spermidine to lysine side chain, leading to the formation of the unusual amino acid hypusine. eIF-5As are the only known proteins to undergo this modification, which is essential for their function.

In terms of biological role, translation factor that promotes translation elongation and termination, particularly upon ribosome stalling at specific amino acid sequence contexts. Binds between the exit (E) and peptidyl (P) site of the ribosome and promotes rescue of stalled ribosome: specifically required for efficient translation of polyproline-containing peptides as well as other motifs that stall the ribosome. Acts as a ribosome quality control (RQC) cofactor by joining the RQC complex to facilitate peptidyl transfer during CAT tailing step. This chain is Eukaryotic translation initiation factor 5A-1, found in Solanum lycopersicum (Tomato).